The chain runs to 323 residues: Cytochrome c biogenesis protein CcsA (323 aa).

Helical transmembrane passes span 18–38 (VSVV…VGLY), 43–63 (KGML…WVYW), 71–91 (LYES…IPSF), 99–119 (LNVI…SGLL), 146–166 (LGYA…IIIF), 227–247 (VISL…VWAN), 256–276 (WDPK…YLHI), and 288–308 (AIVA…VNLL).

Belongs to the CcmF/CycK/Ccl1/NrfE/CcsA family. In terms of assembly, may interact with Ccs1.

The protein resides in the plastid. Its subcellular location is the chloroplast thylakoid membrane. Required during biogenesis of c-type cytochromes (cytochrome c6 and cytochrome f) at the step of heme attachment. In Spinacia oleracea (Spinach), this protein is Cytochrome c biogenesis protein CcsA.